Reading from the N-terminus, the 402-residue chain is Protein prenyltransferase alpha subunit repeat-containing protein 1 (402 aa).

A2 is subject to N-acetylalanine. PFTA repeat units lie at residues 87–120 (LIDVTCTLLLLNPDFTTAWNVRKELILSGTLNPI), 122–155 (DLHLGKLALTKFPKSPETWIHRRWVLQQLIQETS), 180–213 (EMEVCGEAAGRYPSNYNAWSHRIWVLQHLAKLDV), and 219–252 (ELSSTKHWASMHVSDHSGFHYRQFLLKSLISQTV). The tract at residues 263 to 282 (LRSEPALVPPKDEEAAVSTE) is disordered. The stretch at 295–328 (EVEFSTDLIDSYPGHETLWCHRRHIFYLQHHLNA) is one PFTA 5 repeat.

Belongs to the protein prenyltransferase subunit alpha family.

In Homo sapiens (Human), this protein is Protein prenyltransferase alpha subunit repeat-containing protein 1 (PTAR1).